A 394-amino-acid chain; its full sequence is Elongation factor Tu (394 aa).

The tr-type G domain maps to 10–204 (KPHVNIGTIG…AVDSWIPLPE (195 aa)). The interval 19 to 26 (GHVDHGKT) is G1. Residue 19 to 26 (GHVDHGKT) participates in GTP binding. Position 26 (Thr26) interacts with Mg(2+). The G2 stretch occupies residues 60-64 (GITIN). Positions 81 to 84 (DCPG) are G3. GTP contacts are provided by residues 81–85 (DCPGH) and 136–139 (NKCD). Positions 136–139 (NKCD) are G4. The G5 stretch occupies residues 174–176 (SGL).

The protein belongs to the TRAFAC class translation factor GTPase superfamily. Classic translation factor GTPase family. EF-Tu/EF-1A subfamily. Monomer.

The protein localises to the cytoplasm. The enzyme catalyses GTP + H2O = GDP + phosphate + H(+). GTP hydrolase that promotes the GTP-dependent binding of aminoacyl-tRNA to the A-site of ribosomes during protein biosynthesis. The sequence is that of Elongation factor Tu from Ureaplasma parvum serovar 3 (strain ATCC 27815 / 27 / NCTC 11736).